A 437-amino-acid polypeptide reads, in one-letter code: Epsilon-sarcoglycan (437 aa).

Residues 1–317 lie on the Extracellular side of the membrane; the sequence is MLLFWWWELG…LKSRDYYTDF (317 aa). N-linked (GlcNAc...) asparagine glycosylation occurs at asparagine 200. Residues 318–338 traverse the membrane as a helical segment; sequence LVTLAVPSAVALVLFLILAYI. The Cytoplasmic portion of the chain corresponds to 339–437; sequence MCCRREGVEK…QPQTTGKWYP (99 aa).

Belongs to the sarcoglycan alpha/epsilon family. In terms of processing, N-glycosylated. Post-translationally, ubiquitinated, leading to its degradation by the proteasome. As to expression, identified in all tissues tested. Expression highest in lung and placenta, moderate in brain, heart and skeletal muscle, low in kidney and liver. Also detected in embryo.

Its subcellular location is the cell membrane. It is found in the sarcolemma. It localises to the golgi apparatus. The protein resides in the cell projection. The protein localises to the dendrite. Its subcellular location is the cytoplasm. It is found in the cytoskeleton. Functionally, component of the sarcoglycan complex, a subcomplex of the dystrophin-glycoprotein complex which forms a link between the F-actin cytoskeleton and the extracellular matrix. This is Epsilon-sarcoglycan (Sgce) from Mus musculus (Mouse).